The following is a 466-amino-acid chain: Methylenomycin A resistance protein (466 aa).

14 consecutive transmembrane segments (helical) span residues Ile16–Val36, Trp56–Ala76, Thr83–Ile103, Leu113–Ser133, Leu146–Val166, Leu168–Ser188, Val203–Ile223, Val234–Ile254, Phe276–Leu296, Phe305–Phe325, Leu337–Ser357, Val367–Ile387, Ile409–Tyr429, and Phe434–Leu454.

It belongs to the major facilitator superfamily. EmrB family.

The protein resides in the cell membrane. Functionally, resistance to the epoxide antibiotic methylenomycin. The protein is Methylenomycin A resistance protein (mmr) of Bacillus subtilis (strain 168).